The following is a 224-amino-acid chain: Histone H1.03 (224 aa).

2 stretches are compositionally biased toward low complexity: residues 1–22 and 30–42; these read MAET…AKAA and AAGG…PAGP. 2 disordered regions span residues 1 to 43 and 99 to 224; these read MAET…AGPS and QTKG…PKKK. The H15 domain maps to 40–113; that stretch reads AGPSVTELIT…GASGSFRLSK (74 aa). Composition is skewed to basic residues over residues 122–137, 145–162, 170–188, and 197–224; these read APKK…KPAA, KKPK…KAKK, KAAK…KKAV, and KAVK…PKKK.

The protein belongs to the histone H1/H5 family.

Its subcellular location is the nucleus. The protein resides in the chromosome. Histones H1 are necessary for the condensation of nucleosome chains into higher-order structures. In Gallus gallus (Chicken), this protein is Histone H1.03.